The primary structure comprises 522 residues: Anthranilate synthase component 1 (522 aa).

Residues Ser40 and Pro292–Met294 contribute to the L-tryptophan site. Gly329–Thr330 provides a ligand contact to chorismate. Mg(2+) is bound at residue Glu362. Chorismate-binding positions include Tyr450, Arg470, Gly484–Gly486, and Gly486. Residue Glu499 coordinates Mg(2+).

This sequence belongs to the anthranilate synthase component I family. In terms of assembly, heterotetramer consisting of two non-identical subunits: a beta subunit (TrpG) and a large alpha subunit (TrpE). It depends on Mg(2+) as a cofactor.

It carries out the reaction chorismate + L-glutamine = anthranilate + pyruvate + L-glutamate + H(+). Its pathway is amino-acid biosynthesis; L-tryptophan biosynthesis; L-tryptophan from chorismate: step 1/5. Its activity is regulated as follows. Feedback inhibited by tryptophan. In terms of biological role, part of a heterotetrameric complex that catalyzes the two-step biosynthesis of anthranilate, an intermediate in the biosynthesis of L-tryptophan. In the first step, the glutamine-binding beta subunit (TrpG) of anthranilate synthase (AS) provides the glutamine amidotransferase activity which generates ammonia as a substrate that, along with chorismate, is used in the second step, catalyzed by the large alpha subunit of AS (TrpE) to produce anthranilate. In the absence of TrpG, TrpE can synthesize anthranilate directly from chorismate and high concentrations of ammonia. The protein is Anthranilate synthase component 1 (trpE) of Buchnera aphidicola subsp. Baizongia pistaciae (strain Bp).